The sequence spans 373 residues: Queuine tRNA-ribosyltransferase (373 aa).

Asp90 serves as the catalytic Proton acceptor. Residues 90–94 (DSGGF), Asp144, Gln193, and Gly220 each bind substrate. The tract at residues 251–257 (GVGTPED) is RNA binding. Asp270 (nucleophile) is an active-site residue. The segment at 275-279 (TRNAR) is RNA binding; important for wobble base 34 recognition. Residues Cys308, Cys310, Cys313, and His339 each coordinate Zn(2+).

Belongs to the queuine tRNA-ribosyltransferase family. As to quaternary structure, homodimer. Within each dimer, one monomer is responsible for RNA recognition and catalysis, while the other monomer binds to the replacement base PreQ1. Zn(2+) is required as a cofactor.

It carries out the reaction 7-aminomethyl-7-carbaguanine + guanosine(34) in tRNA = 7-aminomethyl-7-carbaguanosine(34) in tRNA + guanine. The protein operates within tRNA modification; tRNA-queuosine biosynthesis. Functionally, catalyzes the base-exchange of a guanine (G) residue with the queuine precursor 7-aminomethyl-7-deazaguanine (PreQ1) at position 34 (anticodon wobble position) in tRNAs with GU(N) anticodons (tRNA-Asp, -Asn, -His and -Tyr). Catalysis occurs through a double-displacement mechanism. The nucleophile active site attacks the C1' of nucleotide 34 to detach the guanine base from the RNA, forming a covalent enzyme-RNA intermediate. The proton acceptor active site deprotonates the incoming PreQ1, allowing a nucleophilic attack on the C1' of the ribose to form the product. After dissociation, two additional enzymatic reactions on the tRNA convert PreQ1 to queuine (Q), resulting in the hypermodified nucleoside queuosine (7-(((4,5-cis-dihydroxy-2-cyclopenten-1-yl)amino)methyl)-7-deazaguanosine). The sequence is that of Queuine tRNA-ribosyltransferase from Campylobacter lari (strain RM2100 / D67 / ATCC BAA-1060).